Here is a 414-residue protein sequence, read N- to C-terminus: Probable elongation factor 1-gamma 1 (414 aa).

The region spanning 1-82 (MALVLHTYKG…YVSRLNGDNS (82 aa)) is the GST N-terminal domain. In terms of domain architecture, GST C-terminal spans 87 to 215 (SLIEYAQIEQ…VKQTEAVPPI (129 aa)). A compositionally biased stretch (low complexity) spans 214-224 (PIASKKAAQPA). The disordered stretch occupies residues 214–260 (PIASKKAAQPAKPKEEPKKKEAPVAEAPKLAEEEEAPKPKAKNPLDL). The segment covering 225–236 (KPKEEPKKKEAP) has biased composition (basic and acidic residues). Residues 254 to 414 (AKNPLDLLPP…EALLDAKCFK (161 aa)) form the EF-1-gamma C-terminal domain.

As to quaternary structure, EF-1 is composed of four subunits: alpha, beta, delta, and gamma.

Its function is as follows. Probably plays a role in anchoring the complex to other cellular components. This Arabidopsis thaliana (Mouse-ear cress) protein is Probable elongation factor 1-gamma 1.